Consider the following 375-residue polypeptide: Filamin-binding LIM protein 1 (375 aa).

The interval methionine 1–asparagine 69 is filamin-binding. A disordered region spans residues alanine 40 to proline 176. Residues lysine 60–glycine 83 show a composition bias toward polar residues. Composition is skewed to pro residues over residues leucine 98 to alanine 107 and leucine 133 to alanine 144. 3 consecutive LIM zinc-binding domains span residues aspartate 183–lysine 244, cysteine 245–alanine 302, and proline 303–alanine 372. Residues isoleucine 278 to cysteine 375 form an FERMT2-binding region.

In terms of assembly, interacts with FERMT2, FLNA, FLNB and FLNC. Interacts with NKX2-5.

The protein localises to the cell junction. Its subcellular location is the focal adhesion. It localises to the cytoplasm. The protein resides in the cytoskeleton. It is found in the stress fiber. Functionally, serves as an anchoring site for cell-ECM adhesion proteins and filamin-containing actin filaments. Is implicated in cell shape modulation (spreading) and motility. May participate in the regulation of filamin-mediated cross-linking and stabilization of actin filaments. May also regulate the assembly of filamin-containing signaling complexes that control actin assembly. Promotes dissociation of FLNA from ITGB3 and ITGB7. Promotes activation of integrins and regulates integrin-mediated cell-cell adhesion. In Mus musculus (Mouse), this protein is Filamin-binding LIM protein 1 (Fblim1).